The primary structure comprises 175 residues: VQ motif-containing protein 25 (175 aa).

A VQ motif is present at residues 50–59 (FRELVQSLTG).

The protein localises to the nucleus. Functionally, may function as negative regulator of plant defense. The chain is VQ motif-containing protein 25 from Arabidopsis thaliana (Mouse-ear cress).